The sequence spans 213 residues: Pyrrolidone-carboxylate peptidase (213 aa).

Residues Glu-78, Cys-141, and His-165 contribute to the active site.

The protein belongs to the peptidase C15 family. Homotetramer.

The protein localises to the cytoplasm. The enzyme catalyses Release of an N-terminal pyroglutamyl group from a polypeptide, the second amino acid generally not being Pro.. Functionally, removes 5-oxoproline from various penultimate amino acid residues except L-proline. The sequence is that of Pyrrolidone-carboxylate peptidase from Clostridium perfringens (strain 13 / Type A).